A 230-amino-acid polypeptide reads, in one-letter code: Ureidoacrylate amidohydrolase RutB (230 aa).

The active-site Proton acceptor is the Asp24. The active site involves Lys133. The active-site Nucleophile is Cys166.

Belongs to the isochorismatase family. RutB subfamily.

It catalyses the reaction (Z)-3-ureidoacrylate + H2O + H(+) = (Z)-3-aminoacrylate + NH4(+) + CO2. It carries out the reaction (Z)-3-ureidoacrylate + H2O = (Z)-3-aminoacrylate + carbamate + H(+). The enzyme catalyses (Z)-2-methylureidoacrylate + H2O + H(+) = (Z)-2-methylaminoacrylate + NH4(+) + CO2. Hydrolyzes ureidoacrylate to form aminoacrylate and carbamate. The carbamate hydrolyzes spontaneously, thereby releasing one of the nitrogen atoms of the pyrimidine ring as ammonia and one of its carbon atoms as CO2. The protein is Ureidoacrylate amidohydrolase RutB of Escherichia coli O81 (strain ED1a).